Here is a 366-residue protein sequence, read N- to C-terminus: Leucine dehydrogenase (366 aa).

The active site involves Lys-80. NAD(+) is bound at residue 180–186; that stretch reads GVGHVAY.

Belongs to the Glu/Leu/Phe/Val dehydrogenases family. In terms of assembly, homooctamer.

It carries out the reaction L-leucine + NAD(+) + H2O = 4-methyl-2-oxopentanoate + NH4(+) + NADH + H(+). Its pathway is amino-acid degradation; L-leucine degradation; 4-methyl-2-oxopentanoate from L-leucine (dehydrogenase route): step 1/1. Inhibited by pyridoxal phosphate. Catalyzes the reversible deamination of L-leucine to 4-methyl-2-oxopentanoate. Exhibits the highest activity with L-leucine as substrate, but can also use other L-amino acids such as L-isoleucine, L-valine and L-2-aminovaleric acid. All of the oxo analogs of the amino acid substrates serve as good substrates for the reverse reaction. The chain is Leucine dehydrogenase (ldh) from Thermoactinomyces intermedius.